A 140-amino-acid polypeptide reads, in one-letter code: Organic hydroperoxide resistance protein-like (140 aa).

This sequence belongs to the OsmC/Ohr family.

This Mycoplasma pneumoniae (strain ATCC 29342 / M129 / Subtype 1) (Mycoplasmoides pneumoniae) protein is Organic hydroperoxide resistance protein-like.